The following is a 185-amino-acid chain: Large ribosomal subunit protein uL5 (185 aa).

This sequence belongs to the universal ribosomal protein uL5 family. As to quaternary structure, part of the 50S ribosomal subunit; part of the 5S rRNA/L5/L18/L25 subcomplex. Contacts the 5S rRNA and the P site tRNA. Forms a bridge to the 30S subunit in the 70S ribosome.

Functionally, this is one of the proteins that bind and probably mediate the attachment of the 5S RNA into the large ribosomal subunit, where it forms part of the central protuberance. In the 70S ribosome it contacts protein S13 of the 30S subunit (bridge B1b), connecting the 2 subunits; this bridge is implicated in subunit movement. Contacts the P site tRNA; the 5S rRNA and some of its associated proteins might help stabilize positioning of ribosome-bound tRNAs. The sequence is that of Large ribosomal subunit protein uL5 from Nitrobacter hamburgensis (strain DSM 10229 / NCIMB 13809 / X14).